A 434-amino-acid chain; its full sequence is uncharacterized protein (434 aa).

Helical transmembrane passes span 27–47 (IFLL…QSVI), 64–84 (FYLS…FVNW), 244–264 (IILA…ATVL), 289–309 (VPVN…PSLL), and 387–407 (LILT…GAVF).

It belongs to the CbiQ family.

The protein resides in the cell membrane. This is an uncharacterized protein from Mycoplasma pneumoniae (strain ATCC 29342 / M129 / Subtype 1) (Mycoplasmoides pneumoniae).